The sequence spans 229 residues: Transmembrane 4 L6 family member 20 (229 aa).

Residues 1 to 14 (MTCCEGWTSCNGFS) are Lumenal-facing. The helical transmembrane segment at 15–35 (LLVLLLLGVVLNAIPLIVSLV) threads the bilayer. Residues 36-44 (EEDQFSQNP) lie on the Cytoplasmic side of the membrane. Residues 45–65 (ISCFEWWFPGIIGAGLMAIPA) traverse the membrane as a helical segment. The Lumenal segment spans residues 66–83 (TTMSLTARKRACCNNRTG). A helical transmembrane segment spans residues 84-104 (MFLSSLFSVITVIGALYCMLI). The Cytoplasmic segment spans residues 105–185 (SIQALLKGPL…HFDSEENKHR (81 aa)). The helical transmembrane segment at 186–206 (LIHFSVFLGLLLVGILEVLFG) threads the bilayer. Topologically, residues 207-229 (LSQIVIGFLGCLCGVSKRRSQIV) are lumenal.

The protein belongs to the L6 tetraspanin family. Glycosylated at Asn-132, Asn-148 and Asn-163 in presence of ceramide which inverts the orientation of TM4SF20 in membranes exposing these residues to the endoplasmic reticulum lumen. Post-translationally, cleaved by signal peptidase at Ser-14 but the peptide does not act as a signal peptide. Cleavage is inhibited by ceramide which inverts the orientation of TM4SF20 in membranes exposing the N-terminus to the cytosol and not to the endoplasmic reticulum lumen. As to expression, expressed in the brain, with high levels in the parietal lobe, hippocampus, pons, white matter and cerebellum.

It is found in the membrane. The protein resides in the endoplasmic reticulum membrane. In terms of biological role, polytopic transmembrane protein that inhibits regulated intramembrane proteolysis (RIP) of CREB3L1, inhibiting its activation and the induction of collagen synthesis. In response to ceramide, which alters TM4SF20 membrane topology, stimulates RIP activation of CREB3L1. Ceramide reverses the direction through which transmembrane helices are translocated into the endoplasmic reticulum membrane during translation of TM4SF20, this mechanism is called 'regulated alternative translocation' (RAT) and regulates the function of the transmembrane protein. The polypeptide is Transmembrane 4 L6 family member 20 (TM4SF20) (Homo sapiens (Human)).